A 274-amino-acid polypeptide reads, in one-letter code: Carbonic anhydrase (274 aa).

The Zn(2+) site is built by C39, H98, and C101. Residues 214 to 274 are disordered; that stretch reads EDEYAPHPNS…QAERIYRGSR (61 aa). Basic and acidic residues-rich tracts occupy residues 234–245 and 261–274; these read PGKERPGREKAT and LPRE…RGSR.

This sequence belongs to the beta-class carbonic anhydrase family. In terms of assembly, a hexamer formed by a trimer of dimers. Interacts with the first 260 residues of CcmM; both the N-terminal 206 residues and the C-terminal tail contribute to CcmM binding. Interacts with full-length and the N-terminal 249 residues of CcmM. A probable CcmM-CcaA-CcmN complex as well as a CcaA-RuBisCO-CcmM complex can also be isolated. Zn(2+) serves as cofactor.

Its subcellular location is the carboxysome. The enzyme catalyses hydrogencarbonate + H(+) = CO2 + H2O. Inhibited by ethoxyzolamide. Reversible hydration of carbon dioxide. Essential to photosynthetic carbon dioxide fixation, supplies CO(2) to RuBisCO (ribulose bisphosphate carboxylase, rbcL-rbcS) in the carboxysome. This Synechocystis sp. (strain ATCC 27184 / PCC 6803 / Kazusa) protein is Carbonic anhydrase.